We begin with the raw amino-acid sequence, 435 residues long: Trigger factor (435 aa).

Residues 163 to 248 enclose the PPIase FKBP-type domain; that stretch reads DDITLIDFTG…INEIKRKELA (86 aa).

The protein belongs to the FKBP-type PPIase family. Tig subfamily.

It is found in the cytoplasm. The catalysed reaction is [protein]-peptidylproline (omega=180) = [protein]-peptidylproline (omega=0). Its function is as follows. Involved in protein export. Acts as a chaperone by maintaining the newly synthesized protein in an open conformation. Functions as a peptidyl-prolyl cis-trans isomerase. The protein is Trigger factor of Desulforamulus reducens (strain ATCC BAA-1160 / DSM 100696 / MI-1) (Desulfotomaculum reducens).